The following is a 398-amino-acid chain: Type III polyketide synthase pspB (398 aa).

Residues Lys47 and 47-54 (KLLQINRS) contribute to the CoA site. The active-site Nucleophile is the Cys152. 214–215 (SD) is a substrate binding site. CoA is bound by residues Leu267, Gly321, 321–324 (GGEA), and Ala324.

The protein belongs to the thiolase-like superfamily. Chalcone/stilbene synthases family. As to quaternary structure, homodimer.

The catalysed reaction is 11 malonyl-CoA + acetyl-CoA + S-adenosyl-L-methionine + 12 NADPH + 22 H(+) = soppiline B + S-adenosyl-L-homocysteine + 12 CO2 + 12 NADP(+) + 12 CoA + 8 H2O. It participates in secondary metabolite biosynthesis. Functionally, type III polyketide synthase; part of the gene cluster that mediates the biosynthesis of the alkylresorcinols called soppilines. The biosynthesis starts with the HR-PKS pspA-catalyzed carbon chain assembly through nine chain elongation cycles, using acetyl CoA and malonyl CoA as a starter and extender units, respectively, to produce the polyketide soppiline A. In the first round, the KR, DH, and CMeT domains work to produce 2-methyl-2-butenyl thioester. In rounds 2 to 5, the KR, DH, and ER domains fully catalyze the reduction of the elongated beta-ketothioester, resulting in the insertion of eight methylene units. The unusual Z,E,Z-triene motif is likely constructed during rounds 6 to 8. Typically, the DH domain introduces a double bond at an alpha,beta-position of an elongated polyketide chain, with the dehydration of a beta-hydroxy group. The last extension cycle would be carried out with L-oriented beta-ketoreduction by the KR domain to produce beta-hydroxy carboxylic acid soppiline A. The type III PKS pspB intercepts the elongated polyketide chain at round 8 from the HR-PKS pspA, followed by a tri-keto extension and decarboxylative aldol cyclization to produce 1,3,5-trisubstituted alkylresorcinol soppiline B. Subsequently, the cytochrome P450 monooxygenase pspC catalyzes three-step oxidations at the C-4 methyl group to carboxylic acid to yield soppiline C. The protein is Type III polyketide synthase pspB of Penicillium soppii.